The chain runs to 186 residues: Elongation factor P (186 aa).

The protein belongs to the elongation factor P family.

The protein resides in the cytoplasm. It functions in the pathway protein biosynthesis; polypeptide chain elongation. Its function is as follows. Involved in peptide bond synthesis. Stimulates efficient translation and peptide-bond synthesis on native or reconstituted 70S ribosomes in vitro. Probably functions indirectly by altering the affinity of the ribosome for aminoacyl-tRNA, thus increasing their reactivity as acceptors for peptidyl transferase. The protein is Elongation factor P of Cupriavidus necator (strain ATCC 17699 / DSM 428 / KCTC 22496 / NCIMB 10442 / H16 / Stanier 337) (Ralstonia eutropha).